A 312-amino-acid chain; its full sequence is Glyoxylate/hydroxypyruvate reductase A (312 aa).

R227 is a catalytic residue. H275 acts as the Proton donor in catalysis.

Belongs to the D-isomer specific 2-hydroxyacid dehydrogenase family. GhrA subfamily.

It localises to the cytoplasm. The enzyme catalyses glycolate + NADP(+) = glyoxylate + NADPH + H(+). It carries out the reaction (R)-glycerate + NAD(+) = 3-hydroxypyruvate + NADH + H(+). It catalyses the reaction (R)-glycerate + NADP(+) = 3-hydroxypyruvate + NADPH + H(+). Functionally, catalyzes the NADPH-dependent reduction of glyoxylate and hydroxypyruvate into glycolate and glycerate, respectively. The protein is Glyoxylate/hydroxypyruvate reductase A of Klebsiella pneumoniae subsp. pneumoniae (strain ATCC 700721 / MGH 78578).